Consider the following 187-residue polypeptide: Calcium and integrin-binding family member 2 (187 aa).

3 EF-hand domains span residues Arg-66–Ser-101, Pro-103–Ser-138, and Glu-144–Phe-179. Ca(2+) is bound by residues Asp-116, Asn-118, Asp-120, Asp-127, Asp-157, Asp-159, Asp-161, Lys-163, and Asp-168.

Monomer. Homodimer. Interacts with WHRN and MYO7A. Interacts with ITGA2B (via C-terminus cytoplasmic tail region); this interaction is stabilized/increased in a calcium and magnesium-dependent manner. Interacts with ITGA7 (via C-terminus cytoplasmic tail region); this interaction is stabilized/increased in a calcium and magnesium-dependent manner. Interacts with TMC1. Interacts with TMC2. Interacts with PIEZO1. Expressed in inner and outer segments of photoreceptor cells, as well as in the pigmented epithelium. Also observed in the inner and outer plexiform layers and in the ganglion cell layer (at protein level). Expressed in sensory hair cell stereocilia, with expression mainly at the basal body of the kinocilium and in the hair bundle stereocilia; and the apical surface of hair cells (at protein level). Located in the tip region of the stereocilia and at the apical surface of hair cells around the cuticular plate (at protein level). Not expressed in the hair bundles of the vestibular hair cells. Strongly expressed in skeletal muscles, brain, kidney and liver. Expressed in the skeletal muscle, retina and cochlea. Expressed in megakaryocytes and endothelial cells. Expressed in heart, spleen, lung, and inner ear. In the inner ear, expressed in the vestibule, basilar membrane and spiral ganglion cells. Expressed in the supporting cells in both the organ of Corti and the vestibular sensory epithelia.

The protein localises to the cytoplasm. Its subcellular location is the cell projection. The protein resides in the stereocilium. It is found in the photoreceptor inner segment. It localises to the cilium. The protein localises to the photoreceptor outer segment. Its subcellular location is the cell membrane. The protein resides in the sarcolemma. Its function is as follows. Calcium- and integrin-binding protein that plays a role in intracellular calcium homeostasis. Acts as an auxiliary subunit of the sensory mechanoelectrical transduction (MET) channel in hair cells. Essential for mechanoelectrical transduction (MET) currents in auditory hair cells and thereby required for hearing. Regulates the function of hair cell mechanotransduction by controlling the distribution of transmembrane channel-like proteins TMC1 and TMC2, and by regulating the function of the MET channels in hair cells. Required for the maintenance of auditory hair cell stereocilia bundle morphology and function and for hair-cell survival in the cochlea. Critical for proper photoreceptor cell maintenance and function. Plays a role in intracellular calcium homeostasis by decreasing ATP-induced calcium release. Seems to be dispensable for vestibular functions. The chain is Calcium and integrin-binding family member 2 (Cib2) from Mus musculus (Mouse).